Here is a 485-residue protein sequence, read N- to C-terminus: Glutamyl-tRNA(Gln) amidotransferase subunit A (485 aa).

Active-site charge relay system residues include K79 and S154. Catalysis depends on S178, which acts as the Acyl-ester intermediate.

The protein belongs to the amidase family. GatA subfamily. In terms of assembly, heterotrimer of A, B and C subunits.

It carries out the reaction L-glutamyl-tRNA(Gln) + L-glutamine + ATP + H2O = L-glutaminyl-tRNA(Gln) + L-glutamate + ADP + phosphate + H(+). In terms of biological role, allows the formation of correctly charged Gln-tRNA(Gln) through the transamidation of misacylated Glu-tRNA(Gln) in organisms which lack glutaminyl-tRNA synthetase. The reaction takes place in the presence of glutamine and ATP through an activated gamma-phospho-Glu-tRNA(Gln). This chain is Glutamyl-tRNA(Gln) amidotransferase subunit A, found in Bacillus velezensis (strain DSM 23117 / BGSC 10A6 / LMG 26770 / FZB42) (Bacillus amyloliquefaciens subsp. plantarum).